The sequence spans 557 residues: 2-succinyl-5-enolpyruvyl-6-hydroxy-3-cyclohexene-1-carboxylate synthase (557 aa).

The protein belongs to the TPP enzyme family. MenD subfamily. As to quaternary structure, homodimer. It depends on Mg(2+) as a cofactor. Requires Mn(2+) as cofactor. Thiamine diphosphate is required as a cofactor.

It catalyses the reaction isochorismate + 2-oxoglutarate + H(+) = 5-enolpyruvoyl-6-hydroxy-2-succinyl-cyclohex-3-ene-1-carboxylate + CO2. It functions in the pathway quinol/quinone metabolism; 1,4-dihydroxy-2-naphthoate biosynthesis; 1,4-dihydroxy-2-naphthoate from chorismate: step 2/7. It participates in quinol/quinone metabolism; menaquinone biosynthesis. Catalyzes the thiamine diphosphate-dependent decarboxylation of 2-oxoglutarate and the subsequent addition of the resulting succinic semialdehyde-thiamine pyrophosphate anion to isochorismate to yield 2-succinyl-5-enolpyruvyl-6-hydroxy-3-cyclohexene-1-carboxylate (SEPHCHC). The protein is 2-succinyl-5-enolpyruvyl-6-hydroxy-3-cyclohexene-1-carboxylate synthase of Staphylococcus aureus (strain MRSA252).